A 411-amino-acid polypeptide reads, in one-letter code: Tyrosine--tRNA ligase (411 aa).

Tyr-34 contributes to the L-tyrosine binding site. Positions 39–48 match the 'HIGH' region motif; sequence CTATSLHIGS. L-tyrosine is bound by residues Tyr-171 and Gln-175. The short motif at 231–235 is the 'KMSKS' region element; the sequence is KMGKT. ATP is bound at residue Lys-234. In terms of domain architecture, S4 RNA-binding spans 345 to 411; sequence ISAYELFHEA…GKKKHILVRV (67 aa).

The protein belongs to the class-I aminoacyl-tRNA synthetase family. TyrS type 1 subfamily. Homodimer.

Its subcellular location is the cytoplasm. The enzyme catalyses tRNA(Tyr) + L-tyrosine + ATP = L-tyrosyl-tRNA(Tyr) + AMP + diphosphate + H(+). Catalyzes the attachment of tyrosine to tRNA(Tyr) in a two-step reaction: tyrosine is first activated by ATP to form Tyr-AMP and then transferred to the acceptor end of tRNA(Tyr). The chain is Tyrosine--tRNA ligase from Rickettsia conorii (strain ATCC VR-613 / Malish 7).